Here is a 188-residue protein sequence, read N- to C-terminus: Pyridoxal 5'-phosphate synthase subunit PdxT (188 aa).

An L-glutamine-binding site is contributed by 46–48; the sequence is GES. The active-site Nucleophile is the cysteine 78. Residues arginine 105 and 134–135 contribute to the L-glutamine site; that span reads IR. Residues histidine 170 and glutamate 172 each act as charge relay system in the active site.

This sequence belongs to the glutaminase PdxT/SNO family. In terms of assembly, in the presence of PdxS, forms a dodecamer of heterodimers. Only shows activity in the heterodimer.

The enzyme catalyses aldehydo-D-ribose 5-phosphate + D-glyceraldehyde 3-phosphate + L-glutamine = pyridoxal 5'-phosphate + L-glutamate + phosphate + 3 H2O + H(+). The catalysed reaction is L-glutamine + H2O = L-glutamate + NH4(+). The protein operates within cofactor biosynthesis; pyridoxal 5'-phosphate biosynthesis. Its function is as follows. Catalyzes the hydrolysis of glutamine to glutamate and ammonia as part of the biosynthesis of pyridoxal 5'-phosphate. The resulting ammonia molecule is channeled to the active site of PdxS. This chain is Pyridoxal 5'-phosphate synthase subunit PdxT, found in Desulforamulus reducens (strain ATCC BAA-1160 / DSM 100696 / MI-1) (Desulfotomaculum reducens).